The following is a 151-amino-acid chain: Large ribosomal subunit protein bL9 (151 aa).

This sequence belongs to the bacterial ribosomal protein bL9 family.

Its function is as follows. Binds to the 23S rRNA. The protein is Large ribosomal subunit protein bL9 of Desulfosudis oleivorans (strain DSM 6200 / JCM 39069 / Hxd3) (Desulfococcus oleovorans).